A 203-amino-acid polypeptide reads, in one-letter code: MLMFTEKEFAAFEVAGLDERMAVIRAQIQPIFQELDTYFAEQLAPELGTELFVHIAQHRRRTVYPPENTWSALSPNKRGYKMQPHFQLGIWGDYVFMWLSFIDNPKNEKQIAQAFLENQQLFQALPEDTYVSLDHTVPQITPLPETDLEKALTRFRDVKKGEFEIGRIIPKDSDLWQNPEKARAYMLATYQQLLPLYQLAVAQ.

This sequence belongs to the UPF0637 family.

The polypeptide is UPF0637 protein EF_3078 (Enterococcus faecalis (strain ATCC 700802 / V583)).